We begin with the raw amino-acid sequence, 65 residues long: Large ribosomal subunit protein uL29 (65 aa).

It belongs to the universal ribosomal protein uL29 family.

The chain is Large ribosomal subunit protein uL29 from Buchnera aphidicola subsp. Baizongia pistaciae (strain Bp).